The primary structure comprises 419 residues: MNIIDELEWRGAIYQQTDEEGLRKWVEEKQISLYCGIDPSGDSMHIGHLIPFMILRRFQNAGHRPIILVGGATGTIGDPSGKKEERKLQSMEQISKNVESLRVQLGKIFDFEGNSAASMVNNYDWTKDVSILDFLRDYGKEFNVNTMLSKDIVASRLEVGISFTEFAYQILQAMDFNHLYEFNDCRLQIGGSDQWGNITAGLDLIRKKQGENAKAFGLTIPLLTKADGTKFGKSEGGAIWLNPEKTTPYEFYQFWINTDDRDVVKYLKYFTFLTEAEIDELAKQVETEPHLRAAQKTLAAEMTKFVHSEEALEQALKISKALFSGDVKALTADEIEQGFKDVPTFVAEDTEANLVDWLVTLGIEPSKRQAREDVANGAIYINGERQQDLEKIMDASDRIENKFTIVRRGKKKYFLVSYK.

Residue tyrosine 34 coordinates L-tyrosine. The 'HIGH' region motif lies at 39–48 (PSGDSMHIGH). Tyrosine 168 and glutamine 172 together coordinate L-tyrosine. The short motif at 230–234 (KFGKS) is the 'KMSKS' region element. Lysine 233 is an ATP binding site. The 67-residue stretch at 352-418 (ANLVDWLVTL…GKKKYFLVSY (67 aa)) folds into the S4 RNA-binding domain.

It belongs to the class-I aminoacyl-tRNA synthetase family. TyrS type 1 subfamily. As to quaternary structure, homodimer.

It is found in the cytoplasm. It catalyses the reaction tRNA(Tyr) + L-tyrosine + ATP = L-tyrosyl-tRNA(Tyr) + AMP + diphosphate + H(+). Functionally, catalyzes the attachment of tyrosine to tRNA(Tyr) in a two-step reaction: tyrosine is first activated by ATP to form Tyr-AMP and then transferred to the acceptor end of tRNA(Tyr). The sequence is that of Tyrosine--tRNA ligase from Listeria monocytogenes serotype 4b (strain F2365).